Reading from the N-terminus, the 447-residue chain is Signal recognition particle 54 kDa protein (447 aa).

Residues 103–110, 185–189, and 245–248 contribute to the GTP site; these read GVQGSGKT, DTAGR, and TKMD.

This sequence belongs to the GTP-binding SRP family. SRP54 subfamily. As to quaternary structure, part of the signal recognition particle protein translocation system, which is composed of SRP and FtsY. Archaeal SRP consists of a 7S RNA molecule of 300 nucleotides and two protein subunits: SRP54 and SRP19.

It localises to the cytoplasm. It catalyses the reaction GTP + H2O = GDP + phosphate + H(+). Involved in targeting and insertion of nascent membrane proteins into the cytoplasmic membrane. Binds to the hydrophobic signal sequence of the ribosome-nascent chain (RNC) as it emerges from the ribosomes. The SRP-RNC complex is then targeted to the cytoplasmic membrane where it interacts with the SRP receptor FtsY. In Saccharolobus islandicus (strain Y.G.57.14 / Yellowstone #1) (Sulfolobus islandicus), this protein is Signal recognition particle 54 kDa protein.